The primary structure comprises 346 residues: Inner membrane protein YnjI (346 aa).

Residues 1-38 (MKKVLLQNHPGSEKYSFNGWEIFNSNFERMIKENKAML) lie on the Periplasmic side of the membrane. The chain crosses the membrane as a helical span at residues 39 to 59 (LCKWGFYLTCVVAVMFVFAAI). Over 60–68 (TSNGLNERG) the chain is Cytoplasmic. A helical membrane pass occupies residues 69–89 (LITAGCSFLYLLIMMGLIVRA). Residues 90-234 (GFKAKKEQLH…DCANHSSGKS (145 aa)) lie on the Periplasmic side of the membrane. A helical transmembrane segment spans residues 235 to 255 (SAKLIWAAELSWMISISSTAF). At 256–346 (QNGTIEEELA…PWGASSVKYS (91 aa)) the chain is on the cytoplasmic side.

The protein localises to the cell inner membrane. In Escherichia coli (strain K12), this protein is Inner membrane protein YnjI (ynjI).